The following is a 574-amino-acid chain: Thiol:disulfide interchange protein DsbD (574 aa).

Positions 1–19 (MAHRILTLILLFCSAHASA) are cleaved as a signal peptide. The cysteines at positions 122 and 128 are disulfide-linked. The tract at residues 147-169 (VKANAATPSAATGEQTRVNSDSP) is disordered. A compositionally biased stretch (polar residues) spans 152–169 (ATPSAATGEQTRVNSDSP). 7 helical membrane-spanning segments follow: residues 173–193 (LPFS…TPCV), 218–238 (LLAF…GLVV), 253–273 (WVLV…FGLF), 306–326 (IAGL…LLYI), 333–353 (WLGG…LILV), 367–387 (WMEQ…VFLL), and 399–419 (LWSV…LNAT). Cysteine 192 and cysteine 314 are oxidised to a cystine. The Thioredoxin domain maps to 430–574 (LLGAAMICAR…FATHLHNRLR (145 aa)). Residues cysteine 489 and cysteine 492 are joined by a disulfide bond.

This sequence belongs to the thioredoxin family. DsbD subfamily.

It localises to the cell inner membrane. It carries out the reaction [protein]-dithiol + NAD(+) = [protein]-disulfide + NADH + H(+). The enzyme catalyses [protein]-dithiol + NADP(+) = [protein]-disulfide + NADPH + H(+). Required to facilitate the formation of correct disulfide bonds in some periplasmic proteins and for the assembly of the periplasmic c-type cytochromes. Acts by transferring electrons from cytoplasmic thioredoxin to the periplasm. This transfer involves a cascade of disulfide bond formation and reduction steps. In Cronobacter sakazakii (strain ATCC BAA-894) (Enterobacter sakazakii), this protein is Thiol:disulfide interchange protein DsbD.